The primary structure comprises 82 residues: MAADRAQNLQDTFLNHVRKTKTPLTIFLVNGVKLQGIVTWFDNFCLLLRRDGHSQLVYKHAISTIMPGAPIQLFESGEDSPA.

Positions 11–71 (DTFLNHVRKT…ISTIMPGAPI (61 aa)) constitute a Sm domain.

Belongs to the Hfq family. Homohexamer.

In terms of biological role, RNA chaperone that binds small regulatory RNA (sRNAs) and mRNAs to facilitate mRNA translational regulation in response to envelope stress, environmental stress and changes in metabolite concentrations. Also binds with high specificity to tRNAs. This chain is RNA-binding protein Hfq, found in Rhodopseudomonas palustris (strain TIE-1).